The sequence spans 354 residues: Ornithine carbamoyltransferase, catabolic (354 aa).

Residues 67–70 (STRT), Gln-94, Arg-118, and 145–148 (HPTQ) contribute to the carbamoyl phosphate site. Residues Asn-177, Asp-241, and 245-246 (SM) each bind L-ornithine. Carbamoyl phosphate-binding positions include 284 to 285 (CL) and Arg-329.

The protein belongs to the aspartate/ornithine carbamoyltransferase superfamily. OTCase family.

The protein localises to the cytoplasm. It carries out the reaction carbamoyl phosphate + L-ornithine = L-citrulline + phosphate + H(+). It participates in amino-acid degradation; L-arginine degradation via ADI pathway; carbamoyl phosphate from L-arginine: step 2/2. In terms of biological role, reversibly catalyzes the transfer of the carbamoyl group from carbamoyl phosphate (CP) to the N(epsilon) atom of ornithine (ORN) to produce L-citrulline. This chain is Ornithine carbamoyltransferase, catabolic (arcB), found in Lactococcus lactis subsp. cremoris (Streptococcus cremoris).